The following is a 431-amino-acid chain: ABSCISIC ACID-INSENSITIVE 5-like protein 7 (431 aa).

Positions 1–29 (MGTHINFNNLGGGGHPGGEGSSNQMKPTG) are disordered. The span at 10–20 (LGGGGHPGGEG) shows a compositional bias: gly residues. S39 and S61 each carry phosphoserine. S110 carries the post-translational modification Phosphoserine; by CPK32. The segment at 133 to 153 (DGNMEGSSGGGGESNVPPGRQ) is disordered. T155 carries the post-translational modification Phosphothreonine. The segment covering 319 to 331 (SPGTSSAENNSLS) has biased composition (polar residues). The disordered stretch occupies residues 319–338 (SPGTSSAENNSLSPVPYVLN). The Nuclear localization signal motif lies at 340–347 (GRRSNTGL). The 64-residue stretch at 351–414 (IERRQRRMIK…KNELKETSKR (64 aa)) folds into the bZIP domain. The tract at residues 353-372 (RRQRRMIKNRESAARSRARK) is basic motif. The stretch at 372-411 (KQAYTLELEAEIEKLKKTNQELQKKQAEMVEMQKNELKET) forms a coiled coil. Residues 379-393 (LEAEIEKLKKTNQEL) are leucine-zipper.

The protein belongs to the bZIP family. ABI5 subfamily. As to quaternary structure, DNA-binding heterodimer. Interacts with CPK32 and the AFP proteins AFP1, AFP2 and AFP3. Interacts with FREE1 (via C-terminus). In terms of processing, phosphorylated by CPK4 and CPK11 in vitro. As to expression, expressed in roots, leaves, flowers and immatures siliques.

The protein localises to the nucleus. In terms of biological role, functions as a transcriptional activator in the ABA-inducible expression of LTI65/RD29B (AC Q04980). Binds specifically to the ABA-responsive element (ABRE) of the LTI65/RD29B (AC Q04980) gene promoter. Binds to the promoter of FREE1 and activates its transcription. The sequence is that of ABSCISIC ACID-INSENSITIVE 5-like protein 7 from Arabidopsis thaliana (Mouse-ear cress).